Reading from the N-terminus, the 68-residue chain is U1-agatoxin-Ta1c (68 aa).

The N-terminal stretch at 1–17 is a signal peptide; that stretch reads MKLQLMICLVLLPCFFC. Cystine bridges form between C23–C53, C39–C49, and C42–C62. K67 is modified (lysine amide).

It belongs to the helical arthropod-neuropeptide-derived (HAND) family. Expressed by the venom gland.

It is found in the secreted. Toxin that paralyzes insects. May have a direct effect on the insect central nervous system. The sequence is that of U1-agatoxin-Ta1c from Eratigena agrestis (Hobo spider).